We begin with the raw amino-acid sequence, 376 residues long: Hydroxylysine kinase (376 aa).

Catalysis depends on aspartate 229, which acts as the Proton acceptor.

This sequence belongs to the aminoglycoside phosphotransferase family.

It localises to the cytoplasm. It catalyses the reaction (5R)-5-hydroxy-L-lysine + GTP = (5R)-5-phosphooxy-L-lysine + GDP + H(+). Catalyzes the GTP-dependent phosphorylation of 5-hydroxy-L-lysine. This is Hydroxylysine kinase (HYKK) from Bos taurus (Bovine).